A 186-amino-acid polypeptide reads, in one-letter code: Ribosome-recycling factor (186 aa).

The protein belongs to the RRF family.

It is found in the cytoplasm. Responsible for the release of ribosomes from messenger RNA at the termination of protein biosynthesis. May increase the efficiency of translation by recycling ribosomes from one round of translation to another. The protein is Ribosome-recycling factor of Burkholderia cenocepacia (strain HI2424).